A 292-amino-acid polypeptide reads, in one-letter code: 2-(5''-triphosphoribosyl)-3'-dephosphocoenzyme-A synthase (292 aa).

This sequence belongs to the CitG/MdcB family.

The enzyme catalyses 3'-dephospho-CoA + ATP = 2'-(5''-triphospho-alpha-D-ribosyl)-3'-dephospho-CoA + adenine. Catalyzes the formation of 2-(5''-triphosphoribosyl)-3'-dephosphocoenzyme-A, the precursor of the prosthetic group of the holo-acyl carrier protein (gamma chain) of citrate lyase, from ATP and dephospho-CoA. This chain is 2-(5''-triphosphoribosyl)-3'-dephosphocoenzyme-A synthase, found in Escherichia coli (strain SMS-3-5 / SECEC).